The chain runs to 305 residues: UDP-3-O-acyl-N-acetylglucosamine deacetylase (305 aa).

3 residues coordinate Zn(2+): His-79, His-238, and Asp-242. His-265 acts as the Proton donor in catalysis.

Belongs to the LpxC family. It depends on Zn(2+) as a cofactor.

It carries out the reaction a UDP-3-O-[(3R)-3-hydroxyacyl]-N-acetyl-alpha-D-glucosamine + H2O = a UDP-3-O-[(3R)-3-hydroxyacyl]-alpha-D-glucosamine + acetate. It participates in glycolipid biosynthesis; lipid IV(A) biosynthesis; lipid IV(A) from (3R)-3-hydroxytetradecanoyl-[acyl-carrier-protein] and UDP-N-acetyl-alpha-D-glucosamine: step 2/6. Its function is as follows. Catalyzes the hydrolysis of UDP-3-O-myristoyl-N-acetylglucosamine to form UDP-3-O-myristoylglucosamine and acetate, the committed step in lipid A biosynthesis. The polypeptide is UDP-3-O-acyl-N-acetylglucosamine deacetylase (Shigella boydii serotype 18 (strain CDC 3083-94 / BS512)).